Reading from the N-terminus, the 248-residue chain is UPF0273 protein APE_1505.1 (248 aa).

The 245-residue stretch at 3 to 247 folds into the KaiC domain; that stretch reads DRVKTGIPGM…VVRIGRRVSI (245 aa). 30 to 37 provides a ligand contact to ATP; the sequence is GGPGTGKS.

This sequence belongs to the UPF0273 family.

In Aeropyrum pernix (strain ATCC 700893 / DSM 11879 / JCM 9820 / NBRC 100138 / K1), this protein is UPF0273 protein APE_1505.1.